A 515-amino-acid polypeptide reads, in one-letter code: 2,3-bisphosphoglycerate-independent phosphoglycerate mutase (515 aa).

Mn(2+) is bound by residues D14 and S64. The active-site Phosphoserine intermediate is S64. Substrate contacts are provided by residues H125, 155 to 156 (RD), R187, R193, 263 to 266 (RADR), and K337. Mn(2+)-binding residues include D404, H408, D445, H446, and H464.

The protein belongs to the BPG-independent phosphoglycerate mutase family. In terms of assembly, monomer. Requires Mn(2+) as cofactor.

It catalyses the reaction (2R)-2-phosphoglycerate = (2R)-3-phosphoglycerate. The protein operates within carbohydrate degradation; glycolysis; pyruvate from D-glyceraldehyde 3-phosphate: step 3/5. Catalyzes the interconversion of 2-phosphoglycerate and 3-phosphoglycerate. In Yersinia pseudotuberculosis serotype O:1b (strain IP 31758), this protein is 2,3-bisphosphoglycerate-independent phosphoglycerate mutase.